The sequence spans 610 residues: MSEIFDAKAFLKTVTSQPGVYRMYDAGGTVIYVGKAKDLKKRLSSYFRSNLASRKTEALVAQIQHIDVTVTHTETEALLLEHNYIKLYQPRYNVLLRDDKSYPFIFLSGDTHPRLAMHRGAKHAKGEYFGPFPNGYAVRETLALLQKIFPIRQCENSVYRNRSRPCLQYQIGRCLGPCVAGLVSEEEYTQQVEYVRLFLSGKDDQVLTQLIARMEKASQDLAFEEAARIRDQIQAVRRVTEKQFVSNAGDDLDVIGVAFDAGMACVHVLFIRQGKVLGSRSYFPKVPGGTELGEVVETFVGQFYLQGSQMRTLPGEILLDFNLSDKTLLADSLSELAGRRIHVQTKPRGDRARYLKLARTNAATALVTKLSQQSTITQRLTALATVLKLPAIKRMECFDISHTMGEQTVASCVVFDANGPLRAEYRRYNIAGITPGDDYAAMNQVLRRRYGKAIEESKIPDVILIDGGKGQLAQAKAVFAELDVPWDKHRPLLLGVAKGADRKAGLETLFFEPEGEGFSLPPDSPALHVIQHIRDESHDHAIGGHRKKRAKVKNTSTLETIEGVGPKRRQMLLKYMGGLQGLRNASVEEIAKVPGISQGLAEKIFWSLKH.

The 79-residue stretch at 16–94 (SQPGVYRMYD…IKLYQPRYNV (79 aa)) folds into the GIY-YIG domain. The 36-residue stretch at 204-239 (DQVLTQLIARMEKASQDLAFEEAARIRDQIQAVRRV) folds into the UVR domain.

This sequence belongs to the UvrC family. Interacts with UvrB in an incision complex.

It localises to the cytoplasm. Functionally, the UvrABC repair system catalyzes the recognition and processing of DNA lesions. UvrC both incises the 5' and 3' sides of the lesion. The N-terminal half is responsible for the 3' incision and the C-terminal half is responsible for the 5' incision. The sequence is that of UvrABC system protein C from Salmonella typhi.